Consider the following 312-residue polypeptide: Regulation of nuclear pre-mRNA domain-containing protein 1A (312 aa).

Ser2 bears the N-acetylserine mark. Residues 2 to 133 (SAFSEAALEK…QLKQALYGDK (132 aa)) form the CID domain. Phosphoserine occurs at positions 153, 156, and 285. Residues 244–286 (LADFLRCQKEALAEKEHKLEEYKRKLARVSLVRKELRSRIQSL) are a coiled coil.

Belongs to the UPF0400 (RTT103) family. As to quaternary structure, may form a heterodimer with RPRD1B. Associates with the RNA polymerase II subunit POLR2A (via CTD phosphorylated at 'Ser-2' and 'Ser-7' of the heptad repeats).

It is found in the nucleus. Functionally, interacts with phosphorylated C-terminal heptapeptide repeat domain (CTD) of the largest RNA polymerase II subunit POLR2A, and participates in dephosphorylation of the CTD by RPAP2. May act as a negative regulator of cyclin-D1 (CCND1) and cyclin-E (CCNE1) in the cell cycle. The polypeptide is Regulation of nuclear pre-mRNA domain-containing protein 1A (RPRD1A) (Pongo abelii (Sumatran orangutan)).